The sequence spans 458 residues: UDP-N-acetylmuramate--L-alanine ligase (458 aa).

Residue 112–118 participates in ATP binding; that stretch reads GTHGKTT.

Belongs to the MurCDEF family.

It localises to the cytoplasm. The enzyme catalyses UDP-N-acetyl-alpha-D-muramate + L-alanine + ATP = UDP-N-acetyl-alpha-D-muramoyl-L-alanine + ADP + phosphate + H(+). The protein operates within cell wall biogenesis; peptidoglycan biosynthesis. Cell wall formation. This Syntrophotalea carbinolica (strain DSM 2380 / NBRC 103641 / GraBd1) (Pelobacter carbinolicus) protein is UDP-N-acetylmuramate--L-alanine ligase.